Consider the following 754-residue polypeptide: MTELGDDPDVEALAAARREEALATNQRRLLVLAGDRDAGIDAAFDAVRGADVPDDEVTFVTAREGFRFHRVEPKRASSLLGTTRTLVVLDAHEEFSANALGRVAGAVDGGGLLVLLTPSLDDWPTRRDSFDERLAVPPFSVADVTGRFRGRLVSTLRDHPGVALVDLDSGTVERDGAYRQGISFDAAPPRVPTEKDRRSPRRAYEDCLTADQSEALAALEALTEPGTAVVVEADRGRGKSSAAGLAAGSLAAEGKDVVVTAPGERNAAEVFARAERLLSELGALRGGGAGDFDIAADRGGRVRYVPPTEAGDAAADADALVVDEAAALPVGLLESFLAAPAVAFCTTVRGYEGAGRGFTVRFRDRLDDADREVTDARLDDPIRYAAGDPVESWTFRALLLDARPPVDQLVADATPETVSYRALSPDDLLADEHLLREAFGLLVLAHYRTEPDDLARLLDAPNLTLRALTHEGRVVSVALLAREGGLDPDTRRQMYDGGRIRGNMLPDVFTSQLRDEGAGVPVGYRVMRIATHHAVRSSGLGSRLLTELRDEFADDADYLGVGFGATPELLSFWRDNGYGTVHLSTTRNDTSGEYSALMTRPLSSAGRDLRDRHANWFLGRVGDVLGDALSDLDADVARAALAAVDSFLSPDLSEYEWRVVVGASYGPGLYTTAPGAFRRLGLAHLTNPERASLTPREERLVVRKVLQTHPWDAVADELDFHSTAGAMRALGDAYEPLVDEYGTDAAREERERFR.

Residues 181 to 202 (GISFDAAPPRVPTEKDRRSPRR) form a disordered region. The span at 192–202 (PTEKDRRSPRR) shows a compositional bias: basic and acidic residues. Residues Gln212, 236–245 (GRGKSSAAGL), and Arg383 each bind ATP. Residues 418–603 (VSYRALSPDD…YSALMTRPLS (186 aa)) enclose the N-acetyltransferase domain. Residues 529 to 531 (IAT), 536 to 542 (RSSGLGS), and Glu568 each bind acetyl-CoA.

Belongs to the RNA cytidine acetyltransferase family. TmcA subfamily.

It localises to the cytoplasm. It catalyses the reaction cytidine(34) in elongator tRNA(Met) + acetyl-CoA + ATP + H2O = N(4)-acetylcytidine(34) in elongator tRNA(Met) + ADP + phosphate + CoA + H(+). Catalyzes the formation of N(4)-acetylcytidine (ac(4)C) at the wobble position of tRNA(Met), by using acetyl-CoA as an acetyl donor and ATP (or GTP). This is tRNA(Met) cytidine acetyltransferase TmcA from Haloferax volcanii (strain ATCC 29605 / DSM 3757 / JCM 8879 / NBRC 14742 / NCIMB 2012 / VKM B-1768 / DS2) (Halobacterium volcanii).